A 352-amino-acid chain; its full sequence is Mannonate dehydratase (352 aa).

Belongs to the mannonate dehydratase family. Requires Fe(2+) as cofactor. The cofactor is Mn(2+).

The catalysed reaction is D-mannonate = 2-dehydro-3-deoxy-D-gluconate + H2O. It functions in the pathway carbohydrate metabolism; pentose and glucuronate interconversion. In terms of biological role, catalyzes the dehydration of D-mannonate. In Paraburkholderia phytofirmans (strain DSM 17436 / LMG 22146 / PsJN) (Burkholderia phytofirmans), this protein is Mannonate dehydratase.